We begin with the raw amino-acid sequence, 125 residues long: Basic leucine zipper transcriptional factor ATF-like (125 aa).

Low complexity predominate over residues 1–14 (MPHSSDSSDSSFSR). A disordered region spans residues 1–58 (MPHSSDSSDSSFSRSPPPGKQDSSDDVRRVQRREKNRIAAQKSRQRQTQKADTLHLES). The bZIP domain occupies 26-89 (DVRRVQRREK…KYFTSVLNSH (64 aa)). A basic motif region spans residues 28–50 (RRVQRREKNRIAAQKSRQRQTQK). Position 43 is a phosphoserine (Ser43). A Phosphothreonine modification is found at Thr48. The interval 54–75 (LHLESEDLEKQNAALRKEIKQL) is leucine-zipper.

This sequence belongs to the bZIP family. Heterodimer; mainly heterodimerizes with JUNB. The BATF-JUNB heterodimer interacts with IRF4 and IRF8. Interacts (via bZIP domain) with IRF4 and IRF8; the interaction is direct. Also forms heterodimers with JUN and JUND. Also interacts with IFI35. In terms of processing, phosphorylated on serine and threonine residues and at least one tyrosine residue. Phosphorylation at Ser-43 inhibit DNA binding activity and transforms it as a negative regulator of AP-1 mediated transcription. Phosphorylated. Expressed at highest levels in lung, and at lower levels in placenta, liver, kidney, spleen, and peripheral blood. Detected in SW480 colorectal cancer cell line and several hematopoietic tumor cell lines, including Raji Burkitt's lymphoma. Strongly expressed in mature B- and T-lymphocytes. Also expressed in moderate levels in lymph node and appendix and at low levels in thymus and bone marrow.

The protein resides in the nucleus. The protein localises to the cytoplasm. Functionally, AP-1 family transcription factor that controls the differentiation of lineage-specific cells in the immune system: specifically mediates the differentiation of T-helper 17 cells (Th17), follicular T-helper cells (TfH), CD8(+) dendritic cells and class-switch recombination (CSR) in B-cells. Acts via the formation of a heterodimer with JUNB that recognizes and binds DNA sequence 5'-TGA[CG]TCA-3'. The BATF-JUNB heterodimer also forms a complex with IRF4 (or IRF8) in immune cells, leading to recognition of AICE sequence (5'-TGAnTCA/GAAA-3'), an immune-specific regulatory element, followed by cooperative binding of BATF and IRF4 (or IRF8) and activation of genes. Controls differentiation of T-helper cells producing interleukin-17 (Th17 cells) by binding to Th17-associated gene promoters: regulates expression of the transcription factor RORC itself and RORC target genes such as IL17 (IL17A or IL17B). Also involved in differentiation of follicular T-helper cells (TfH) by directing expression of BCL6 and MAF. In B-cells, involved in class-switch recombination (CSR) by controlling the expression of both AICDA and of germline transcripts of the intervening heavy-chain region and constant heavy-chain region (I(H)-C(H)). Following infection, can participate in CD8(+) dendritic cell differentiation via interaction with IRF4 and IRF8 to mediate cooperative gene activation. Regulates effector CD8(+) T-cell differentiation by regulating expression of SIRT1. Following DNA damage, part of a differentiation checkpoint that limits self-renewal of hematopoietic stem cells (HSCs): up-regulated by STAT3, leading to differentiation of HSCs, thereby restricting self-renewal of HSCs. This Homo sapiens (Human) protein is Basic leucine zipper transcriptional factor ATF-like (BATF).